Reading from the N-terminus, the 737-residue chain is Photosystem I P700 chlorophyll a apoprotein A2 (737 aa).

8 helical membrane passes run 46 to 69 (LFST…FHIA), 135 to 158 (LYQG…LHLQ), 175 to 199 (LNHH…HVAI), 273 to 291 (IAHH…GHMY), 333 to 356 (LHFQ…QHMY), 372 to 398 (AALY…IFFI), 420 to 442 (AIIS…LYVH), and 520 to 538 (FLVH…LILV). Residues Cys562 and Cys571 each contribute to the [4Fe-4S] cluster site. 2 helical membrane passes run 578–599 (AFYL…YWHW) and 646–668 (LAVW…MFLI). Residues His657, Met665, and Tyr673 each contribute to the chlorophyll a site. Residue Trp674 coordinates phylloquinone. Residues 710–730 (VVGLAHFSVGYVLTYAAFLIA) traverse the membrane as a helical segment.

It belongs to the PsaA/PsaB family. As to quaternary structure, the PsaA/B heterodimer binds the P700 chlorophyll special pair and subsequent electron acceptors. PSI consists of a core antenna complex that captures photons, and an electron transfer chain that converts photonic excitation into a charge separation. The cyanobacterial PSI reaction center is composed of one copy each of PsaA,B,C,D,E,F,I,J,K,L,M and X, and forms trimeric complexes. It depends on PSI electron transfer chain: 5 chlorophyll a, 1 chlorophyll a', 2 phylloquinones and 3 4Fe-4S clusters. PSI core antenna: 90 chlorophyll a, 22 carotenoids, 3 phospholipids and 1 galactolipid. P700 is a chlorophyll a/chlorophyll a' dimer, A0 is one or more chlorophyll a, A1 is one or both phylloquinones and FX is a shared 4Fe-4S iron-sulfur center. as a cofactor.

The protein localises to the cellular thylakoid membrane. The enzyme catalyses reduced [plastocyanin] + hnu + oxidized [2Fe-2S]-[ferredoxin] = oxidized [plastocyanin] + reduced [2Fe-2S]-[ferredoxin]. PsaA and PsaB bind P700, the primary electron donor of photosystem I (PSI), as well as the electron acceptors A0, A1 and FX. PSI is a plastocyanin/cytochrome c6-ferredoxin oxidoreductase, converting photonic excitation into a charge separation, which transfers an electron from the donor P700 chlorophyll pair to the spectroscopically characterized acceptors A0, A1, FX, FA and FB in turn. Oxidized P700 is reduced on the lumenal side of the thylakoid membrane by plastocyanin or cytochrome c6. This Parasynechococcus marenigrum (strain WH8102) protein is Photosystem I P700 chlorophyll a apoprotein A2.